The primary structure comprises 593 residues: MLO-like protein 8 (593 aa).

At 1–46 (MGIIDGSLLRRLICLCLWCLLGGGVTVVTAEDEKKVVHKQLNQTPT) the chain is on the extracellular side. The helical transmembrane segment at 47-67 (WAVAAVCTFFIVVSVLLEKLL) threads the bilayer. At 68 to 92 (HKVGKVLWDRHKTALLDALEKIKAE) the chain is on the cytoplasmic side. A helical transmembrane segment spans residues 93-113 (LMVLGFISLLLTFGQTYILDI). Topologically, residues 114-181 (CIPSHVARTM…ISAEALHQLH (68 aa)) are extracellular. The helical transmembrane segment at 182–202 (ILIFFLAIFHVLYSFLTMMLG) threads the bilayer. At 203–304 (RLKIRGWKHW…IKRSLEDDFK (102 aa)) the chain is on the cytoplasmic side. Residues 305–325 (VVVGVSPVLWGSFVLFLLLNI) form a helical membrane-spanning segment. Residue Asp326 is a topological domain, extracellular. Residues 327 to 347 (GFKMMFIGTAIPVIIILAVGT) form a helical membrane-spanning segment. The Cytoplasmic segment spans residues 348 to 393 (KLQAIMTRMALGITDRHAVVQGMPLVQGNDEYFWFGRPHLILHLMH). A helical transmembrane segment spans residues 394 to 414 (FALFQNAFQITYFFWIWYSFG). Residues 415-430 (SDSCYHPNFKIALVKV) lie on the Extracellular side of the membrane. The chain crosses the membrane as a helical span at residues 431 to 451 (AIALGVLCLCSYITLPLYALV). Residues 452–593 (TQMGSRMKKS…APSNESSQDR (142 aa)) lie on the Cytoplasmic side of the membrane. The calmodulin-binding stretch occupies residues 465–486 (EQTSKALKKWRMAVKKKKGVKA). Residues 481-593 (KKGVKATTKR…APSNESSQDR (113 aa)) form a disordered region. Low complexity predominate over residues 489-512 (KRLGGDGSASPTASTVRSTSSVRS). Over residues 528-539 (LDPETSDLDTDN) the composition is skewed to acidic residues. Positions 567–579 (TSRDTETDSKEFS) are enriched in basic and acidic residues.

It belongs to the MLO family.

It is found in the membrane. May be involved in modulation of pathogen defense and leaf cell death. Activity seems to be regulated by Ca(2+)-dependent calmodulin binding and seems not to require heterotrimeric G proteins. This Arabidopsis thaliana (Mouse-ear cress) protein is MLO-like protein 8 (MLO8).